Reading from the N-terminus, the 362-residue chain is Oxysterol-binding protein 5 (362 aa).

Belongs to the OSBP family.

This chain is Oxysterol-binding protein 5 (osbE), found in Dictyostelium discoideum (Social amoeba).